A 1365-amino-acid chain; its full sequence is Homeotic protein spalt-major (1365 aa).

Disordered regions lie at residues 47 to 194, 270 to 298, and 322 to 363; these read SADK…EVTL, QAKQ…EEEE, and LINA…NTHK. 2 stretches are compositionally biased toward low complexity: residues 63–76 and 87–99; these read SPLT…SPSR and EQST…PEQS. Basic and acidic residues predominate over residues 103–117; the sequence is HQLENDIKSEAKSEI. Residues 146 to 157 are compositionally biased toward low complexity; the sequence is PSSPVAEASAEE. Residues 159–181 are compositionally biased toward basic and acidic residues; the sequence is ATERTPEKEKEKDVEVDVEKPDE. Positions 275 to 298 are enriched in acidic residues; sequence EDTEEDADQEQDQEQETDTYEEEE. Residues 346–363 show a composition bias toward basic and acidic residues; it reads HDHESQPNRRPSLDNTHK. C2H2-type zinc fingers lie at residues 451-473 and 479-501; these read HRCR…IRSH and FKCN…FQRH. Disordered stretches follow at residues 508–554 and 586–716; these read VPMN…ASFP and ELPT…TPGQ. Residues 530-539 are compositionally biased toward polar residues; that stretch reads MSPTDSSPNH. The segment covering 540–554 has biased composition (pro residues); it reads SPAPPPLGSAPASFP. 2 stretches are compositionally biased toward basic and acidic residues: residues 603–622 and 638–662; these read PQVK…HEQE and VRIK…EPRR. A phosphoserine mark is found at S739 and S744. The disordered stretch occupies residues 740-772; that stretch reads PEHHSPVRSPAGGALPPGVPPPPHHHPHHMARS. 3 C2H2-type zinc fingers span residues 824 to 846, 852 to 874, and 884 to 906; these read NQCV…YRTH, FKCR…MAVH, and HQCP…IRLH. Disordered stretches follow at residues 948-1012, 1030-1129, and 1146-1241; these read ALPG…RSGD, VVNT…ILTS, and HHLQ…GARP. Residues 976–991 show a composition bias toward acidic residues; that stretch reads DMDDNMDCGEDYDDDV. Positions 1040-1054 are enriched in low complexity; the sequence is SSASSHGHSVGSTSA. Positions 1055-1079 are enriched in polar residues; that stretch reads PTSPSVHASSQVIKRSSSPARSEAS. Residues S1076 and S1079 each carry the phosphoserine modification. 3 stretches are compositionally biased toward low complexity: residues 1085–1100, 1114–1123, and 1146–1168; these read LTPR…SRSP, RSPSGSSHAS, and HHLQ…AAAA. Residues 1181–1191 show a composition bias toward basic and acidic residues; it reads QHQEQLRREAA. The span at 1192 to 1218 shows a compositional bias: low complexity; sequence EAQQKAAAAAAAAAAAAAAQRQTPPQA. 2 consecutive C2H2-type zinc fingers follow at residues 1289-1311 and 1317-1339; these read TTCG…YRSH and FKCS…MLTH.

It belongs to the sal C2H2-type zinc-finger protein family.

It is found in the nucleus. Its function is as follows. Required for the establishment of the posterior-most head and the anterior-most tail segments of the embryo. Probably function as a transcriptional regulator. Could repress the transcription of the tsh gene. The polypeptide is Homeotic protein spalt-major (salm) (Drosophila melanogaster (Fruit fly)).